We begin with the raw amino-acid sequence, 59 residues long: Light-harvesting protein B-800-850 alpha chain E (59 aa).

At 1-11 (MNQGRIWTVVK) the chain is on the cytoplasmic side. The helical transmembrane segment at 12-35 (PTVGLPLLLGSVTVIAILVHFAVL) threads the bilayer. A bacteriochlorophyll is bound at residue histidine 31. At 36-59 (SNTTWFSKYWNGKAAAIESSVSIG) the chain is on the periplasmic side.

It belongs to the antenna complex alpha subunit family. The core complex is formed by different alpha and beta chains, binding bacteriochlorophyll molecules, and arranged most probably in tetrameric structures disposed around the reaction center. The non-pigmented gamma chains may constitute additional components.

The protein localises to the cell inner membrane. Functionally, antenna complexes are light-harvesting systems, which transfer the excitation energy to the reaction centers. This is Light-harvesting protein B-800-850 alpha chain E (pucAE) from Rhodopseudomonas palustris (strain ATCC BAA-98 / CGA009).